Consider the following 397-residue polypeptide: MEKVFIKALPVLRILIEAGHQAYFVGGAVRDSYMKRTIGDVDIATDAAPDQVERLFQRTVDVGKEHGTIIVLWEDETYEVTTFRTESDYVDFRRPSEVQFISSLEEDLKRRDLTINAMAMTADGKVLDYFGGKKDIDQKVIRTVGKPEDRFQEDALRMLRAVRFMSQLGFTLSPETEEAIAKEKSLLSHVSVERKTIEFEKLLQGRASRQALQTLIQTRLYEELPGFYHKRENLISTSEFPFFSLTSREELWAALLINLGIVLKDAPLFLKAWKLPGKVIKEAIHIADTFGQSLDAMTMYRAGKKALLSAAKISQLRQNEKLDEKKLKDIQYAYQNLPIKSLKDLDITGKDLLALRNRPAGKWVSEELQWIEQAVVTGKLSNQKKHIEEWLKTCGQH.

ATP-binding residues include glycine 27 and arginine 30. CTP is bound by residues glycine 27 and arginine 30. Aspartate 40 and aspartate 42 together coordinate Mg(2+). Residues arginine 111, aspartate 154, arginine 157, arginine 160, and arginine 163 each contribute to the ATP site. Positions 111, 154, 157, 160, and 163 each coordinate CTP.

This sequence belongs to the tRNA nucleotidyltransferase/poly(A) polymerase family. Bacterial CCA-adding enzyme type 3 subfamily. Homodimer. Mg(2+) is required as a cofactor.

The enzyme catalyses a tRNA precursor + 2 CTP + ATP = a tRNA with a 3' CCA end + 3 diphosphate. It carries out the reaction a tRNA with a 3' CCA end + 2 CTP + ATP = a tRNA with a 3' CCACCA end + 3 diphosphate. In terms of biological role, catalyzes the addition and repair of the essential 3'-terminal CCA sequence in tRNAs without using a nucleic acid template. Adds these three nucleotides in the order of C, C, and A to the tRNA nucleotide-73, using CTP and ATP as substrates and producing inorganic pyrophosphate. Has no poly(A) polymerase activity. This is CCA-adding enzyme from Bacillus subtilis (strain 168).